A 787-amino-acid chain; its full sequence is Ribonucleoside-diphosphate reductase large subunit (787 aa).

Residues threonine 209, 224 to 225 (SC), glycine 255, 436 to 440 (NLCTE), and 618 to 622 (PTVSS) contribute to the substrate site. Cysteines 225 and 453 form a disulfide. Catalysis depends on asparagine 436, which acts as the Proton acceptor. Cysteine 438 acts as the Cysteine radical intermediate in catalysis. Catalysis depends on glutamate 440, which acts as the Proton acceptor.

It belongs to the ribonucleoside diphosphate reductase large chain family. In terms of assembly, heterotetramer composed of a homodimer of the large subunit (R1) and a homodimer of the small subunit (R2). Larger multisubunit protein complex are also active, composed of (R1)n(R2)n.

The catalysed reaction is a 2'-deoxyribonucleoside 5'-diphosphate + [thioredoxin]-disulfide + H2O = a ribonucleoside 5'-diphosphate + [thioredoxin]-dithiol. Its function is as follows. Ribonucleoside-diphosphate reductase holoenzyme provides the precursors necessary for viral DNA synthesis. Allows virus growth in non-dividing cells, as well as reactivation from latency in infected hosts. Catalyzes the biosynthesis of deoxyribonucleotides from the corresponding ribonucleotides. The protein is Ribonucleoside-diphosphate reductase large subunit of Bos taurus (Bovine).